We begin with the raw amino-acid sequence, 103 residues long: Large ribosomal subunit protein uL23 (103 aa).

This sequence belongs to the universal ribosomal protein uL23 family. As to quaternary structure, part of the 50S ribosomal subunit. Contacts protein L29, and trigger factor when it is bound to the ribosome.

One of the early assembly proteins it binds 23S rRNA. One of the proteins that surrounds the polypeptide exit tunnel on the outside of the ribosome. Forms the main docking site for trigger factor binding to the ribosome. This chain is Large ribosomal subunit protein uL23, found in Chlorobium chlorochromatii (strain CaD3).